Reading from the N-terminus, the 307-residue chain is Protein phosphatase PTC7 homolog fig (307 aa).

Residues 41–300 (VQGSSKDQQL…DDITVILASV (260 aa)) enclose the PPM-type phosphatase domain. Aspartate 77, glycine 78, and aspartate 222 together coordinate Mn(2+).

Belongs to the PP2C family. Mg(2+) is required as a cofactor. It depends on Mn(2+) as a cofactor.

The enzyme catalyses O-phospho-L-seryl-[protein] + H2O = L-seryl-[protein] + phosphate. The catalysed reaction is O-phospho-L-threonyl-[protein] + H2O = L-threonyl-[protein] + phosphate. The polypeptide is Protein phosphatase PTC7 homolog fig (Drosophila grimshawi (Hawaiian fruit fly)).